The sequence spans 231 residues: Large ribosomal subunit protein uL1 (231 aa).

The protein belongs to the universal ribosomal protein uL1 family. In terms of assembly, part of the 50S ribosomal subunit.

Binds directly to 23S rRNA. The L1 stalk is quite mobile in the ribosome, and is involved in E site tRNA release. In terms of biological role, protein L1 is also a translational repressor protein, it controls the translation of the L11 operon by binding to its mRNA. The sequence is that of Large ribosomal subunit protein uL1 from Ralstonia nicotianae (strain ATCC BAA-1114 / GMI1000) (Ralstonia solanacearum).